The chain runs to 215 residues: Protein LURP-one-related 4 (215 aa).

This sequence belongs to the LOR family.

Might be related to the phospholipid scramblase and tubby-like superfamily of membrane tethered transcription factors. The polypeptide is Protein LURP-one-related 4 (Arabidopsis thaliana (Mouse-ear cress)).